The sequence spans 448 residues: Chaperone SurA (448 aa).

The signal sequence occupies residues 1 to 27; sequence MKKTLRFAAVASGLVASLITVAPSASA. PpiC domains lie at 185–288 and 301–399; these read QQDL…RLVE and IVQT…QVLG.

The protein localises to the periplasm. It carries out the reaction [protein]-peptidylproline (omega=180) = [protein]-peptidylproline (omega=0). Chaperone involved in the correct folding and assembly of outer membrane proteins. Recognizes specific patterns of aromatic residues and the orientation of their side chains, which are found more frequently in integral outer membrane proteins. May act in both early periplasmic and late outer membrane-associated steps of protein maturation. In Burkholderia mallei (strain ATCC 23344), this protein is Chaperone SurA.